Here is a 408-residue protein sequence, read N- to C-terminus: MSKRDIVLTNVTVVQLLRQPCPVTRAPPPPEPKAEVEPQPQPEPTPVREEIKPPPPPLPPHPATPPPKMVSVARELTVGINGFGRIGRLVLRACMEKGVKVVAVNDPFIDPEYMVYMFKYDSTHGRYKGSVEFRNGQLVVDNHEISVYQCKEPKQIPWRAVGSPYVVESTGVYLSIQAASDHISAGAQRVVISAPSPDAPMFVMGVNENDYNPGSMNIVSNASCTTNCLAPLAKVIHERFGIVEGLMTTVHSYTATQKTVDGPSRKAWRDGRGAHQNIIPASTGAAKAVTKVIPELKGKLTGMAFRVPTPDVSVVDLTCRLAQPAPYSAIKEAVKAAAKGPMAGILAYTEDEVVSTDFLGDTHSSIFDAKAGIALNDNFVKLISWYDNEYGYSHRVVDLLRYMFSRDK.

The tract at residues 1 to 73 is testis-specific N-terminal extension; it reads MSKRDIVLTN…TPPPKMVSVA (73 aa). Positions 19-68 are disordered; sequence QPCPVTRAPPPPEPKAEVEPQPQPEPTPVREEIKPPPPPLPPHPATPPPK. Pro residues predominate over residues 53-68; that stretch reads PPPPPLPPHPATPPPK. NAD(+)-binding positions include 85-86, Asp-106, Lys-151, Tyr-173, and Ser-193; that span reads RI. D-glyceraldehyde 3-phosphate is bound by residues 223–225, Thr-254, 283–284, and Arg-306; these read SCT and TG. Residue Cys-224 is the Nucleophile of the active site. Position 388 (Asn-388) interacts with NAD(+).

Belongs to the glyceraldehyde-3-phosphate dehydrogenase family. Homotetramer. Interacts with ARRB2; the interaction is detected in the nucleus upon OR1D2 stimulation. Testis specific.

The protein localises to the cytoplasm. It catalyses the reaction D-glyceraldehyde 3-phosphate + phosphate + NAD(+) = (2R)-3-phospho-glyceroyl phosphate + NADH + H(+). The protein operates within carbohydrate degradation; glycolysis; pyruvate from D-glyceraldehyde 3-phosphate: step 1/5. Functionally, may play an important role in regulating the switch between different pathways for energy production during spermiogenesis and in the spermatozoon. Required for sperm motility and male fertility. The protein is Glyceraldehyde-3-phosphate dehydrogenase, testis-specific (GAPDHS) of Homo sapiens (Human).